Consider the following 338-residue polypeptide: uncharacterized protein (338 aa).

The disordered stretch occupies residues 1 to 20 (MYNNNQNHHNNDNNMNKDEP). The segment covering 9–20 (HNNDNNMNKDEP) has biased composition (basic and acidic residues). 6 N-linked (GlcNAc...) asparagine glycosylation sites follow: asparagine 37, asparagine 83, asparagine 97, asparagine 105, asparagine 114, and asparagine 122. The disordered stretch occupies residues 55-92 (VNSGNNNNNNNNNNNNNNNNNNNNNNNNNDSIVINMDT). The segment covering 59–92 (NNNNNNNNNNNNNNNNNNNNNNNNNDSIVINMDT) has biased composition (low complexity). 3 helical membrane-spanning segments follow: residues 148-168 (YKKF…IVLI), 178-198 (FHAY…FLLI), and 202-222 (ILSI…FLKV). Residues asparagine 229, asparagine 240, asparagine 286, asparagine 302, asparagine 317, and asparagine 322 are each glycosylated (N-linked (GlcNAc...) asparagine). Disordered regions lie at residues 279 to 303 (SNLN…NSNS) and 316 to 338 (LNSS…TNEE). Low complexity predominate over residues 280–294 (NLNRNNNNSNNVNNN). The segment covering 316–327 (LNSSGSNSSIYS) has biased composition (low complexity). Residues 328–338 (DVQNDIGTNEE) are compositionally biased toward polar residues.

The protein localises to the membrane. This is an uncharacterized protein from Dictyostelium discoideum (Social amoeba).